The following is a 370-amino-acid chain: Phospho-2-dehydro-3-deoxyheptonate aldolase, phenylalanine-inhibited (370 aa).

It belongs to the class-I DAHP synthase family.

The catalysed reaction is D-erythrose 4-phosphate + phosphoenolpyruvate + H2O = 7-phospho-2-dehydro-3-deoxy-D-arabino-heptonate + phosphate. It functions in the pathway metabolic intermediate biosynthesis; chorismate biosynthesis; chorismate from D-erythrose 4-phosphate and phosphoenolpyruvate: step 1/7. Inhibited by phenyalanine. Functionally, stereospecific condensation of phosphoenolpyruvate (PEP) and D-erythrose-4-phosphate (E4P) giving rise to 3-deoxy-D-arabino-heptulosonate-7-phosphate (DAHP). In Saccharomyces cerevisiae (strain ATCC 204508 / S288c) (Baker's yeast), this protein is Phospho-2-dehydro-3-deoxyheptonate aldolase, phenylalanine-inhibited (ARO3).